Reading from the N-terminus, the 165-residue chain is Crossover junction endodeoxyribonuclease RuvC (165 aa).

Active-site residues include D7, E67, and D140. Positions 7, 67, and 140 each coordinate Mg(2+).

Belongs to the RuvC family. Homodimer which binds Holliday junction (HJ) DNA. The HJ becomes 2-fold symmetrical on binding to RuvC with unstacked arms; it has a different conformation from HJ DNA in complex with RuvA. In the full resolvosome a probable DNA-RuvA(4)-RuvB(12)-RuvC(2) complex forms which resolves the HJ. Requires Mg(2+) as cofactor.

It is found in the cytoplasm. It carries out the reaction Endonucleolytic cleavage at a junction such as a reciprocal single-stranded crossover between two homologous DNA duplexes (Holliday junction).. Functionally, the RuvA-RuvB-RuvC complex processes Holliday junction (HJ) DNA during genetic recombination and DNA repair. Endonuclease that resolves HJ intermediates. Cleaves cruciform DNA by making single-stranded nicks across the HJ at symmetrical positions within the homologous arms, yielding a 5'-phosphate and a 3'-hydroxyl group; requires a central core of homology in the junction. The consensus cleavage sequence is 5'-(A/T)TT(C/G)-3'. Cleavage occurs on the 3'-side of the TT dinucleotide at the point of strand exchange. HJ branch migration catalyzed by RuvA-RuvB allows RuvC to scan DNA until it finds its consensus sequence, where it cleaves and resolves the cruciform DNA. This is Crossover junction endodeoxyribonuclease RuvC from Halothermothrix orenii (strain H 168 / OCM 544 / DSM 9562).